A 1394-amino-acid polypeptide reads, in one-letter code: Adhesion and penetration protein autotransporter (1394 aa).

Residues 1–25 form the signal peptide; the sequence is MKKTVFRLNFLTACISLGIVSQAWA. Residues 26–286 enclose the Peptidase S6 domain; sequence GHTYFGIDYQ…QLVRKSYFDE (261 aa). The active site involves S243. Disordered regions lie at residues 848-870 and 995-1027; these read AYSA…TPTS and TLEA…FPDT. The 255-residue stretch at 1140 to 1394 folds into the Autotransporter domain; the sequence is VDQAQSAVWT…NVGVKLGYRW (255 aa).

The protein localises to the periplasm. Its subcellular location is the secreted. It is found in the cell surface. It localises to the cell outer membrane. Probable protease; promotes adherence and invasion by directly binding to a host cell structure. The protein is Adhesion and penetration protein autotransporter (hap) of Haemophilus influenzae.